The chain runs to 185 residues: Ribosome-recycling factor (185 aa).

It belongs to the RRF family.

Its subcellular location is the cytoplasm. Its function is as follows. Responsible for the release of ribosomes from messenger RNA at the termination of protein biosynthesis. May increase the efficiency of translation by recycling ribosomes from one round of translation to another. The polypeptide is Ribosome-recycling factor (Corynebacterium efficiens (strain DSM 44549 / YS-314 / AJ 12310 / JCM 11189 / NBRC 100395)).